Consider the following 170-residue polypeptide: Peptide deformylase (170 aa).

Fe cation-binding residues include Cys91 and His133. Residue Glu134 is part of the active site. Fe cation is bound at residue His137.

This sequence belongs to the polypeptide deformylase family. It depends on Fe(2+) as a cofactor.

It carries out the reaction N-terminal N-formyl-L-methionyl-[peptide] + H2O = N-terminal L-methionyl-[peptide] + formate. Its function is as follows. Removes the formyl group from the N-terminal Met of newly synthesized proteins. Requires at least a dipeptide for an efficient rate of reaction. N-terminal L-methionine is a prerequisite for activity but the enzyme has broad specificity at other positions. In Histophilus somni (strain 2336) (Haemophilus somnus), this protein is Peptide deformylase.